The sequence spans 634 residues: Glutathione S-transferase C-terminal domain-containing protein (634 aa).

The region spanning 131-333 (LGFKKTCLKA…QEVPKVKTAA (203 aa)) is the GST C-terminal domain. The tract at residues 189 to 233 (RVHNDDKLRRQKLKQQKAAGSEPPSGKGKAKSKASAQKTPKDLAA) is disordered. The segment covering 204–226 (QKAAGSEPPSGKGKAKSKASAQK) has biased composition (low complexity).

It belongs to the GSTCD family.

Its subcellular location is the cytoplasm. This Mus musculus (Mouse) protein is Glutathione S-transferase C-terminal domain-containing protein (Gstcd).